The chain runs to 241 residues: LAS seventeen-binding protein 1 (241 aa).

Residue serine 2 is modified to N-acetylserine. Residue lysine 41 forms a Glycyl lysine isopeptide (Lys-Gly) (interchain with G-Cter in ubiquitin) linkage. Phosphoserine is present on serine 48. The region spanning 53-112 is the SH3 domain; that stretch reads DTEEYVEALYDFEAQQDGDLSLKTGDKIQVLEKISPDWYRGKSNNKIGIFPANYVKPAFT. Lysine 79 is covalently cross-linked (Glycyl lysine isopeptide (Lys-Gly) (interchain with G-Cter in ubiquitin)). 2 positions are modified to phosphoserine: serine 114 and serine 116. Lysine 118 participates in a covalent cross-link: Glycyl lysine isopeptide (Lys-Gly) (interchain with G-Cter in ubiquitin). Low complexity predominate over residues 118 to 131; sequence KSAEAASSSTVSRP. Residues 118–213 form a disordered region; it reads KSAEAASSST…QQSSGASSAF (96 aa). A PY motif motif is present at residues 135–138; sequence PPSY. Positions 163 to 179 are enriched in pro residues; it reads APPPQQQQAPLPYPPPF. Positions 180–213 are enriched in low complexity; it reads TNYYQQPQQQYAPPSQQAPVEAQPQQSSGASSAF. Lysine 219 is covalently cross-linked (Glycyl lysine isopeptide (Lys-Gly) (interchain with G-Cter in ubiquitin)).

The protein belongs to the LSB1 family. Interacts with LAS17, RSP5 and SUP35. Ubiquitinated by RSP5.

The protein localises to the cytoplasm. It is found in the nucleus. It localises to the cytoskeleton. The protein resides in the actin patch. Its function is as follows. Involved in resistance to EDTA. The protein is LAS seventeen-binding protein 1 (LSB1) of Saccharomyces cerevisiae (strain ATCC 204508 / S288c) (Baker's yeast).